The following is a 151-amino-acid chain: Large ribosomal subunit protein bL9 (151 aa).

It belongs to the bacterial ribosomal protein bL9 family.

Binds to the 23S rRNA. In Francisella tularensis subsp. holarctica (strain LVS), this protein is Large ribosomal subunit protein bL9.